Reading from the N-terminus, the 201-residue chain is Imidazoleglycerol-phosphate dehydratase (201 aa).

It belongs to the imidazoleglycerol-phosphate dehydratase family.

It localises to the cytoplasm. The enzyme catalyses D-erythro-1-(imidazol-4-yl)glycerol 3-phosphate = 3-(imidazol-4-yl)-2-oxopropyl phosphate + H2O. The protein operates within amino-acid biosynthesis; L-histidine biosynthesis; L-histidine from 5-phospho-alpha-D-ribose 1-diphosphate: step 6/9. The polypeptide is Imidazoleglycerol-phosphate dehydratase (Methanopyrus kandleri (strain AV19 / DSM 6324 / JCM 9639 / NBRC 100938)).